The sequence spans 275 residues: Anthracycline biosynthesis protein DauV (275 aa).

VOC domains are found at residues Ala8–Lys136 and Ser150–Leu263.

It functions in the pathway antibiotic biosynthesis; daunorubicin biosynthesis. It participates in antibiotic biosynthesis; carminomycin biosynthesis. Involved in the biosynthesis of the anthracyclines carminomycin and daunorubicin (daunomycin) which are aromatic polyketide antibiotics that exhibit high cytotoxicity and are widely applied in the chemotherapy of a variety of cancers. Acts jointly with DoxA in the conversion of 13-deoxycarminomycin and 13-deoxydaunorubicin to yield carminomycin and daunorubicin, respectively. The sequence is that of Anthracycline biosynthesis protein DauV (dauV) from Streptomyces sp. (strain C5).